The sequence spans 572 residues: Oxygen-dependent choline dehydrogenase (572 aa).

FAD is bound at residue 7 to 36; that stretch reads DYIIIGAGSAGNVLATRLTEDRDVTVLLLE. His474 acts as the Proton acceptor in catalysis.

It belongs to the GMC oxidoreductase family. FAD serves as cofactor.

It catalyses the reaction choline + A = betaine aldehyde + AH2. It carries out the reaction betaine aldehyde + NAD(+) + H2O = glycine betaine + NADH + 2 H(+). It participates in amine and polyamine biosynthesis; betaine biosynthesis via choline pathway; betaine aldehyde from choline (cytochrome c reductase route): step 1/1. In terms of biological role, involved in the biosynthesis of the osmoprotectant glycine betaine. Catalyzes the oxidation of choline to betaine aldehyde and betaine aldehyde to glycine betaine at the same rate. The sequence is that of Oxygen-dependent choline dehydrogenase from Paraburkholderia phymatum (strain DSM 17167 / CIP 108236 / LMG 21445 / STM815) (Burkholderia phymatum).